A 77-amino-acid chain; its full sequence is Large ribosomal subunit protein eL14 (77 aa).

It belongs to the eukaryotic ribosomal protein eL14 family.

The chain is Large ribosomal subunit protein eL14 from Methanococcus vannielii (strain ATCC 35089 / DSM 1224 / JCM 13029 / OCM 148 / SB).